The following is a 263-amino-acid chain: Type III pantothenate kinase (263 aa).

9–16 (DIGNTNVK) contacts ATP. Residues tyrosine 103 and 110 to 113 (GADR) contribute to the substrate site. The active-site Proton acceptor is the aspartate 112. Aspartate 134 lines the K(+) pocket. Position 137 (threonine 137) interacts with ATP. Threonine 190 serves as a coordination point for substrate.

The protein belongs to the type III pantothenate kinase family. As to quaternary structure, homodimer. NH4(+) serves as cofactor. The cofactor is K(+).

It is found in the cytoplasm. The catalysed reaction is (R)-pantothenate + ATP = (R)-4'-phosphopantothenate + ADP + H(+). The protein operates within cofactor biosynthesis; coenzyme A biosynthesis; CoA from (R)-pantothenate: step 1/5. Functionally, catalyzes the phosphorylation of pantothenate (Pan), the first step in CoA biosynthesis. The sequence is that of Type III pantothenate kinase from Oleidesulfovibrio alaskensis (strain ATCC BAA-1058 / DSM 17464 / G20) (Desulfovibrio alaskensis).